The sequence spans 119 residues: Large ribosomal subunit protein bL20 (119 aa).

The protein belongs to the bacterial ribosomal protein bL20 family.

Its function is as follows. Binds directly to 23S ribosomal RNA and is necessary for the in vitro assembly process of the 50S ribosomal subunit. It is not involved in the protein synthesizing functions of that subunit. This is Large ribosomal subunit protein bL20 from Geobacillus thermodenitrificans (strain NG80-2).